A 247-amino-acid chain; its full sequence is Triosephosphate isomerase (247 aa).

The substrate site is built by Asn-10 and Lys-12. The active-site Electrophile is the His-94. Glu-164 serves as the catalytic Proton acceptor.

It belongs to the triosephosphate isomerase family. Homodimer.

The enzyme catalyses D-glyceraldehyde 3-phosphate = dihydroxyacetone phosphate. Its pathway is carbohydrate biosynthesis; gluconeogenesis. It participates in carbohydrate degradation; glycolysis; D-glyceraldehyde 3-phosphate from glycerone phosphate: step 1/1. The polypeptide is Triosephosphate isomerase (Tpi) (Drosophila simulans (Fruit fly)).